Consider the following 1029-residue polypeptide: Probable E3 ubiquitin protein ligase C167.07c (1029 aa).

The IQ domain occupies 46-75 (AENNSVAVQSLSRGFLARRKFKQDFRERWI). Positions 692-1029 (FGKLLKGPIR…VRSGVGFGFS (338 aa)) constitute an HECT domain. Cysteine 997 serves as the catalytic Glycyl thioester intermediate.

Its subcellular location is the cytoplasm. The protein localises to the nucleus. It carries out the reaction S-ubiquitinyl-[E2 ubiquitin-conjugating enzyme]-L-cysteine + [acceptor protein]-L-lysine = [E2 ubiquitin-conjugating enzyme]-L-cysteine + N(6)-ubiquitinyl-[acceptor protein]-L-lysine.. Functionally, probable E3 ubiquitin-protein ligase which mediates ubiquitination and subsequent proteasomal degradation of target proteins. The sequence is that of Probable E3 ubiquitin protein ligase C167.07c from Schizosaccharomyces pombe (strain 972 / ATCC 24843) (Fission yeast).